We begin with the raw amino-acid sequence, 154 residues long: Protein LOL1 (154 aa).

3 putative zinc finger regions span residues 34–64 (QLVC…VTAV), 73–103 (QLVC…VNLA), and 111–141 (HVNC…VTSV).

It localises to the nucleus. Its function is as follows. Positive regulator of reactive oxygen-induced cell death. May be involved in the repression of the copper/zinc superoxide dismutase CSD1 and CSD2 that detoxify accumulating superoxide before the reactive oxygen species (ROS) can trigger a cell death cascade. LSD1 and LOL1 have antagonistic effects on CSD1 and CSD2 accumulation to regulate oxidative stress-induced cell death. This Arabidopsis thaliana (Mouse-ear cress) protein is Protein LOL1 (LOL1).